Consider the following 504-residue polypeptide: Maturase K (504 aa).

It belongs to the intron maturase 2 family. MatK subfamily.

The protein resides in the plastid. It is found in the chloroplast. In terms of biological role, usually encoded in the trnK tRNA gene intron. Probably assists in splicing its own and other chloroplast group II introns. The chain is Maturase K from Hamamelis japonica (Japanese witch hazel).